A 231-amino-acid chain; its full sequence is Ureidoacrylate amidohydrolase RutB (231 aa).

D25 functions as the Proton acceptor in the catalytic mechanism. Residue K134 is part of the active site. The Nucleophile role is filled by C167.

This sequence belongs to the isochorismatase family. RutB subfamily.

It catalyses the reaction (Z)-3-ureidoacrylate + H2O + H(+) = (Z)-3-aminoacrylate + NH4(+) + CO2. It carries out the reaction (Z)-3-ureidoacrylate + H2O = (Z)-3-aminoacrylate + carbamate + H(+). The catalysed reaction is (Z)-2-methylureidoacrylate + H2O + H(+) = (Z)-2-methylaminoacrylate + NH4(+) + CO2. Functionally, hydrolyzes ureidoacrylate to form aminoacrylate and carbamate. The carbamate hydrolyzes spontaneously, thereby releasing one of the nitrogen atoms of the pyrimidine ring as ammonia and one of its carbon atoms as CO2. The polypeptide is Ureidoacrylate amidohydrolase RutB (Escherichia coli O9:H4 (strain HS)).